A 172-amino-acid chain; its full sequence is ATP synthase subunit b (172 aa).

A helical transmembrane segment spans residues 18-38 (IVWSLIILVIVAVFFYKFFMP).

This sequence belongs to the ATPase B chain family. F-type ATPases have 2 components, F(1) - the catalytic core - and F(0) - the membrane proton channel. F(1) has five subunits: alpha(3), beta(3), gamma(1), delta(1), epsilon(1). F(0) has three main subunits: a(1), b(2) and c(10-14). The alpha and beta chains form an alternating ring which encloses part of the gamma chain. F(1) is attached to F(0) by a central stalk formed by the gamma and epsilon chains, while a peripheral stalk is formed by the delta and b chains.

The protein resides in the cell membrane. F(1)F(0) ATP synthase produces ATP from ADP in the presence of a proton or sodium gradient. F-type ATPases consist of two structural domains, F(1) containing the extramembraneous catalytic core and F(0) containing the membrane proton channel, linked together by a central stalk and a peripheral stalk. During catalysis, ATP synthesis in the catalytic domain of F(1) is coupled via a rotary mechanism of the central stalk subunits to proton translocation. Its function is as follows. Component of the F(0) channel, it forms part of the peripheral stalk, linking F(1) to F(0). In Bifidobacterium longum (strain DJO10A), this protein is ATP synthase subunit b.